A 145-amino-acid chain; its full sequence is Peptidyl-lysine N-acetyltransferase YjaB (145 aa).

Positions 3–144 constitute an N-acetyltransferase domain; the sequence is INIRRSRHEE…KPYPLLNLIY (142 aa).

It belongs to the acetyltransferase family.

It catalyses the reaction L-lysyl-[protein] + acetyl-CoA = N(6)-acetyl-L-lysyl-[protein] + CoA + H(+). In terms of biological role, N-epsilon-lysine acetyltransferase that catalyzes acetylation of a large number of proteins. In Salmonella typhimurium (strain LT2 / SGSC1412 / ATCC 700720), this protein is Peptidyl-lysine N-acetyltransferase YjaB (yjaB).